The chain runs to 304 residues: Sulfate adenylyltransferase subunit 2 (304 aa).

The protein belongs to the PAPS reductase family. CysD subfamily. Heterodimer composed of CysD, the smaller subunit, and CysN.

It catalyses the reaction sulfate + ATP + H(+) = adenosine 5'-phosphosulfate + diphosphate. Its pathway is sulfur metabolism; hydrogen sulfide biosynthesis; sulfite from sulfate: step 1/3. In terms of biological role, with CysN forms the ATP sulfurylase (ATPS) that catalyzes the adenylation of sulfate producing adenosine 5'-phosphosulfate (APS) and diphosphate, the first enzymatic step in sulfur assimilation pathway. APS synthesis involves the formation of a high-energy phosphoric-sulfuric acid anhydride bond driven by GTP hydrolysis by CysN coupled to ATP hydrolysis by CysD. In Halorhodospira halophila (strain DSM 244 / SL1) (Ectothiorhodospira halophila (strain DSM 244 / SL1)), this protein is Sulfate adenylyltransferase subunit 2.